Consider the following 148-residue polypeptide: [Ribosomal protein bS18]-alanine N-acetyltransferase (148 aa).

The N-acetyltransferase domain maps to 2 to 147 (NTISSLETTD…DAIIMALPIS (146 aa)). 69 to 71 (IAV) contacts acetyl-CoA. Glutamate 103 acts as the Proton acceptor in catalysis. Asparagine 108 lines the acetyl-CoA pocket. The active-site Proton donor is the tyrosine 115.

The protein belongs to the acetyltransferase family. RimI subfamily.

Its subcellular location is the cytoplasm. It carries out the reaction N-terminal L-alanyl-[ribosomal protein bS18] + acetyl-CoA = N-terminal N(alpha)-acetyl-L-alanyl-[ribosomal protein bS18] + CoA + H(+). Functionally, acetylates the N-terminal alanine of ribosomal protein bS18. In Escherichia coli O157:H7, this protein is [Ribosomal protein bS18]-alanine N-acetyltransferase.